Reading from the N-terminus, the 118-residue chain is Myotrophin (118 aa).

C2 carries the post-translational modification N-acetylcysteine. An ANK 1 repeat occupies 2-30; it reads CDKEFMWALKNGDLDEVKDYVAKGEDVNR. N6-acetyllysine occurs at positions 4, 11, and 24. Phosphothreonine is present on T31. ANK repeat units lie at residues 34 to 66 and 67 to 99; these read GGRK…APDK and HHIT…VKGP.

The protein belongs to the myotrophin family. Interacts with RELA. Interacts with the heterodimer formed by CAPZA1 and CAPZB.

It is found in the cytoplasm. It localises to the nucleus. Its subcellular location is the perinuclear region. Promotes dimerization of NF-kappa-B subunits and regulates NF-kappa-B transcription factor activity. Promotes growth of cardiomyocytes, but not cardiomyocyte proliferation. Promotes cardiac muscle hypertrophy. Plays a role in the regulation of the growth of actin filaments. Inhibits the activity of the F-actin-capping protein complex formed by the CAPZA1 and CAPZB heterodimer. This Bos taurus (Bovine) protein is Myotrophin (MTPN).